Here is a 105-residue protein sequence, read N- to C-terminus: Ketoisovalerate oxidoreductase subunit VorD (105 aa).

4Fe-4S ferredoxin-type domains are found at residues 44-73 and 74-103; these read FKPV…IKPD and GYVA…MIKE. Positions 53, 56, 59, 63, 83, 86, 89, and 93 each coordinate [4Fe-4S] cluster.

Heterotetramer of one alpha, one beta, one delta and one gamma chain. [4Fe-4S] cluster serves as cofactor.

The enzyme catalyses 3-methyl-2-oxobutanoate + 2 oxidized [2Fe-2S]-[ferredoxin] + CoA = 2-methylpropanoyl-CoA + 2 reduced [2Fe-2S]-[ferredoxin] + CO2 + H(+). The protein is Ketoisovalerate oxidoreductase subunit VorD (vorD) of Pyrococcus furiosus (strain ATCC 43587 / DSM 3638 / JCM 8422 / Vc1).